The sequence spans 356 residues: Phosphoribosyl pyrophosphate synthase-associated protein 1 (356 aa).

Met1 is modified (N-acetylmethionine). At Asn2 the chain carries N-acetylproline. Ser177 and Ser215 each carry phosphoserine.

This sequence belongs to the ribose-phosphate pyrophosphokinase family. In terms of assembly, binds to PRPS1 and PRPS2. As to expression, ubiquitous.

Seems to play a negative regulatory role in 5-phosphoribose 1-diphosphate synthesis. In Homo sapiens (Human), this protein is Phosphoribosyl pyrophosphate synthase-associated protein 1 (PRPSAP1).